A 367-amino-acid chain; its full sequence is MPEFVVTALLAPSRLSLKLLRALVMSLVYLAALVAAFVYSCIALTHVMCRPRRGCCGRQRLSPPECLRDPTLGEHCFLTLRVSVPPVKSSGLRLHYVSAGHGNGPLMLFLHGFPENWFSWRYQLREFQSHFHVVAVDMRGYSPSDAPKEVDCYTIDLLLDDIKDTILGLGYSKCILVSHDWGASLAWEFSIYYPSLVERMVVANGPPMSVIQEYSIHHIGQIFRSNYMFLFQLPWLPEKLLSMSDFQILKDTFTHRKNGIPGLTPSELEAFLYHFSQPGCLTGPINYYRNVFRNFPLEPKKLSTPTLLLWGEKDFAFQQGLVEAIGRHFVPGRLESHILPGSGHWIPQSHPQEMHQYMWAFLQDLLG.

Residues 22 to 42 (ALVMSLVYLAALVAAFVYSCI) form a helical membrane-spanning segment. Residue aspartate 180 is the Nucleophile of the active site. The Proton donor role is filled by tyrosine 288. Histidine 344 functions as the Proton acceptor in the catalytic mechanism.

This sequence belongs to the AB hydrolase superfamily. Epoxide hydrolase family. Predominantly expressed in skin, esophagus, lung and tongue and to a lesser extent in pancreas and eye.

The protein localises to the microsome membrane. The catalysed reaction is an epoxide + H2O = an ethanediol. The enzyme catalyses 9,10-epoxyoctadecanoate + H2O = 9,10-dihydroxyoctadecanoate. It carries out the reaction 9,10-epoxy-(12Z)-octadecenoate + H2O = 9,10-dihydroxy-(12Z)-octadecenoate. It catalyses the reaction 8,9-epoxy-(5Z,11Z,14Z)-eicosatrienoate + H2O = 8,9-dihydroxy-(5Z,11Z,14Z)-eicosatrienoate. The catalysed reaction is 11,12-epoxy-(5Z,8Z,14Z)-eicosatrienoate + H2O = 11,12-dihydroxy-(5Z,8Z,14Z)-eicosatrienoate. The enzyme catalyses 14,15-epoxy-(5Z,8Z,11Z)-eicosatrienoate + H2O = 14,15-dihydroxy-(5Z,8Z,11Z)-eicosatrienoate. Inhibited by 1-(1-acetylpiperidin-4-yl)-3-(4-(trifl uoromethoxy)phenyl)urea (TPAU), 1-cyclohexyl-3-dodecylurea (CDU), 12-(3-adamantan-1-yl-ureido)-dodecanoic acid (AUDA), 1-((3S, 5S, 7S)-adamantan-1-yl)-3-(5-(2-(2-ethoxyethoxy) ethoxy)pentyl)urea (AEPU) and to a lesser extent by 8-(3-((3S, 5S, 7S)-adamantan-1-yl)ureido) octanoic acid (AUOA). Its function is as follows. Catalyzes the hydrolysis of epoxide-containing fatty acids. Active in vitro against epoxyeicosatrienoic acids (EETs) including 8,9-EET, 9,10-EET, 11,12-EET and 14,15-EET and leukotoxin. The protein is Epoxide hydrolase 3 (Ephx3) of Mus musculus (Mouse).